The chain runs to 227 residues: tRNA (guanine-N(1)-)-methyltransferase (227 aa).

Residues glycine 111 and 135–140 (LGDYVL) each bind S-adenosyl-L-methionine.

The protein belongs to the RNA methyltransferase TrmD family. As to quaternary structure, homodimer.

Its subcellular location is the cytoplasm. It catalyses the reaction guanosine(37) in tRNA + S-adenosyl-L-methionine = N(1)-methylguanosine(37) in tRNA + S-adenosyl-L-homocysteine + H(+). Functionally, specifically methylates guanosine-37 in various tRNAs. The polypeptide is tRNA (guanine-N(1)-)-methyltransferase (Leifsonia xyli subsp. xyli (strain CTCB07)).